A 427-amino-acid chain; its full sequence is Glutamate-1-semialdehyde 2,1-aminomutase (427 aa).

Lysine 265 carries the N6-(pyridoxal phosphate)lysine modification.

It belongs to the class-III pyridoxal-phosphate-dependent aminotransferase family. HemL subfamily. In terms of assembly, homodimer. Requires pyridoxal 5'-phosphate as cofactor.

Its subcellular location is the cytoplasm. It catalyses the reaction (S)-4-amino-5-oxopentanoate = 5-aminolevulinate. Its pathway is porphyrin-containing compound metabolism; protoporphyrin-IX biosynthesis; 5-aminolevulinate from L-glutamyl-tRNA(Glu): step 2/2. In Stutzerimonas stutzeri (strain A1501) (Pseudomonas stutzeri), this protein is Glutamate-1-semialdehyde 2,1-aminomutase.